The primary structure comprises 553 residues: MPSHLIKSGISKAPHRSLLKALGITDNELKRPFIGVVHSFSEIVPGHVHLRTVVEAVKAGVRTAGGVPFELPVIGVCDGIAMNHEGMKYSLASRELIADSVEVMVKAHQFDALVFVPNCDKIVPGMLIAAMRLNLPAIFVSGGPMLAGRVRGKSVSLSNVFEGVGAVAAGLMSEEELLEYENYACPGCGSCAGMFTANSMNCLTEAIGMALPGNGTIPAVYAERLRLAKLSGEKVMELLSQNIRPRDIFTRESLLNGLAVDMALGCSTNTVLHLAAVAYEAGVEFDLNLVNEVSERTPNLCRLSPAGPHHMEDLYFAGGIPAVMKELSKKGLIREDLLTVSGKTVGENLKNAVNKNPEVIRPIDNPYSETGGLAILFGTLAPRGAVVKKSAVLPEMLTHTGPARVFDSEEDATTAILTGQIKKGDVVVIRYEGPKGGPGMREMLTPTSALAGMGLDKDVALITDGRFSGATRGAAIGHVSPEGYEGGPIALVREGDLIKIDIPGQRLDLLVSEEELNQRKARLQIPEPKIKEGYLARYQKLVSSANLGAVFLK.

Residue D78 participates in Mg(2+) binding. C119 lines the [2Fe-2S] cluster pocket. 2 residues coordinate Mg(2+): D120 and K121. Residue K121 is modified to N6-carboxylysine. A [2Fe-2S] cluster-binding site is contributed by C191. E442 provides a ligand contact to Mg(2+). The active-site Proton acceptor is S468.

The protein belongs to the IlvD/Edd family. In terms of assembly, homodimer. It depends on [2Fe-2S] cluster as a cofactor. Mg(2+) is required as a cofactor.

The enzyme catalyses (2R)-2,3-dihydroxy-3-methylbutanoate = 3-methyl-2-oxobutanoate + H2O. The catalysed reaction is (2R,3R)-2,3-dihydroxy-3-methylpentanoate = (S)-3-methyl-2-oxopentanoate + H2O. It participates in amino-acid biosynthesis; L-isoleucine biosynthesis; L-isoleucine from 2-oxobutanoate: step 3/4. The protein operates within amino-acid biosynthesis; L-valine biosynthesis; L-valine from pyruvate: step 3/4. In terms of biological role, functions in the biosynthesis of branched-chain amino acids. Catalyzes the dehydration of (2R,3R)-2,3-dihydroxy-3-methylpentanoate (2,3-dihydroxy-3-methylvalerate) into 2-oxo-3-methylpentanoate (2-oxo-3-methylvalerate) and of (2R)-2,3-dihydroxy-3-methylbutanoate (2,3-dihydroxyisovalerate) into 2-oxo-3-methylbutanoate (2-oxoisovalerate), the penultimate precursor to L-isoleucine and L-valine, respectively. The chain is Dihydroxy-acid dehydratase from Carboxydothermus hydrogenoformans (strain ATCC BAA-161 / DSM 6008 / Z-2901).